We begin with the raw amino-acid sequence, 365 residues long: 3-galactosyl-N-acetylglucosaminide 4-alpha-L-fucosyltransferase FUT3 (365 aa).

The Cytoplasmic portion of the chain corresponds to 1–15 (MYPPGCAKVKCSWHH). The helical; Signal-anchor for type II membrane protein transmembrane segment at 16–34 (CLPGLLLQLLLALCFFSYL) threads the bilayer. Residues 35-365 (RMSQEKPKPK…TVPSIASWFQ (331 aa)) are Lumenal-facing. N-linked (GlcNAc...) asparagine glycans are attached at residues Asn-100, Asn-158, and Asn-189.

This sequence belongs to the glycosyltransferase 10 family. Glycosylated. Liver, kidney, lung and brain.

The protein localises to the golgi apparatus. The protein resides in the golgi stack membrane. It carries out the reaction a beta-D-galactosyl-(1-&gt;3)-N-acetyl-beta-D-glucosaminyl derivative + GDP-beta-L-fucose = a beta-D-galactosyl-(1-&gt;3)-[alpha-L-fucosyl-(1-&gt;4)]-N-acetyl-beta-D-glucosaminyl derivative + GDP + H(+). The enzyme catalyses an N-acetyl-alpha-neuraminyl-(2-&gt;3)-beta-D-galactosyl-(1-&gt;4)-N-acetyl-beta-D-glucosaminyl derivative + GDP-beta-L-fucose = an alpha-Neu5Ac-(2-&gt;3)-beta-D-Gal-(1-&gt;4)-[alpha-L-Fuc-(1-&gt;3)]-beta-D-GlcNAc derivative + GDP + H(+). The catalysed reaction is a beta-D-galactosyl-(1-&gt;4)-N-acetyl-beta-D-glucosaminyl derivative + GDP-beta-L-fucose = a beta-D-galactosyl-(1-&gt;4)-[alpha-L-fucosyl-(1-&gt;3)]-N-acetyl-beta-D-glucosaminyl derivative + GDP + H(+). It catalyses the reaction an alpha-Neu5Ac-(2-&gt;3)-beta-D-Gal-(1-&gt;4)-beta-D-GlcNAc-(1-&gt;3)-beta-D-Gal-(1-&gt;4)-[alpha-L-Fuc-(1-&gt;3)]-beta-D-GlcNAc derivative + GDP-beta-L-fucose = an alpha-Neu5Ac-(2-&gt;3)-beta-D-Gal-(1-&gt;4)-[alpha-L-Fuc-(1-&gt;3)]-beta-D-GlcNAc-(1-&gt;3)-beta-D-Gal-(1-&gt;4)-[alpha-L-Fuc-(1-&gt;3)]-beta-D-GlcNAc derivative + GDP + H(+). It carries out the reaction Lc4Cer + GDP-beta-L-fucose = a lactoside III(4)-a-Fuc-Lc4Cer + GDP + H(+). The enzyme catalyses a beta-D-Gal-(1-&gt;3)-beta-D-GlcNAc-(1-&gt;3)-beta-D-Gal-(1-&gt;4)-beta-D-Glc-(1&lt;-&gt;1')-Cer(d18:1(4E)) + GDP-beta-L-fucose = a III(4)-a-Fuc-Lc4Cer(d18:1(4E)) + GDP + H(+). The catalysed reaction is N-acetyl-alpha-neuraminosyl-(2-&gt;3)-beta-D-galactosyl-(1-&gt;3)-[N-acetyl-alpha-neuraminosyl-(2-&gt;6)]-N-acetyl-beta-D-glucosaminyl-(1-&gt;3)-beta-D-galactosyl-(1-&gt;4)-beta-D-glucosyl-(1&lt;-&gt;1')-N-acyl-sphing-4-enine + GDP-beta-L-fucose = N-acetyl-alpha-neuraminosyl-(2-&gt;3)-beta-D-galactosyl-(1-&gt;3)-alpha-L-fucosyl-(1-&gt;4)-[N-acetyl-alpha-neuraminosyl-(2-&gt;6)-N-acetyl-beta-D-glucosaminyl-(1-&gt;3)]-beta-D-galactosyl-(1-&gt;4)-beta-D-glucosyl-(1&lt;-&gt;1')-N-acyl-sphing-4-enine + GDP + H(+). It catalyses the reaction N-acetyl-alpha-neuraminosyl-(2-&gt;3)-beta-D-galactosyl-(1-&gt;3)-N-acetyl-beta-D-glucosaminyl-(1-&gt;3)-beta-D-galactosyl-(1-&gt;4)-beta-D-glucosyl-(1&lt;-&gt;1')-N-acyl-sphing-4-enine + GDP-beta-L-fucose = N-acetyl-alpha-neuraminosyl-(2-&gt;3)-beta-D-galactosyl-(1-&gt;3)-alpha-L-fucosyl-(1-&gt;4)-[N-acetyl-beta-D-glucosaminyl-(1-&gt;3)]-beta-D-galactosyl-(1-&gt;4)-beta-D-glucosyl-(1&lt;-&gt;1')-N-acyl-sphing-4-enine + GDP + H(+). It carries out the reaction beta-D-galactosyl-(1-&gt;3)-N-acetyl-D-glucosamine + GDP-beta-L-fucose = beta-D-galactosyl-(1-&gt;3)-[alpha-L-fucosyl-(1-&gt;4)]-N-acetyl-D-glucosamine + GDP + H(+). The enzyme catalyses alpha-L-Fuc-(1-&gt;2)-beta-D-Gal-(1-&gt;3)-D-GlcNAc + GDP-beta-L-fucose = alpha-L-Fuc-(1-&gt;2)-beta-D-Gal-(1-&gt;3)-[alpha-L-Fuc-(1-&gt;4)]-D-GlcNAc + GDP + H(+). The catalysed reaction is alpha-L-Fuc-(1-&gt;2)-beta-D-Gal-(1-&gt;4)-D-GlcNAc + GDP-beta-L-fucose = alpha-L-Fuc-(1-&gt;2)-beta-D-Gal-(1-&gt;4)-[alpha-L-Fuc-(1-&gt;3)]-D-GlcNAc + GDP + H(+). It catalyses the reaction beta-D-galactosyl-(1-&gt;4)-N-acetyl-D-glucosamine + GDP-beta-L-fucose = beta-D-galactosyl-(1-&gt;4)-[alpha-L-fucosyl-(1-&gt;3)]-N-acetyl-D-glucosamine + GDP + H(+). It carries out the reaction lactose + GDP-beta-L-fucose = beta-D-galactosyl-(1-&gt;4)-[alpha-L-fucosyl-(1-&gt;3)]-D-glucose + GDP + H(+). The enzyme catalyses an alpha-Neu5Ac-(2-&gt;3)-beta-D-Gal-(1-&gt;3)-D-GlcNAc derivative + GDP-beta-L-fucose = an alpha-Neu5Ac-(2-&gt;3)-beta-D-Gal-(1-&gt;3)-[alpha-L-Fuc-(1-&gt;4)]-beta-D-GlcNAc derivative + GDP + H(+). The protein operates within protein modification; protein glycosylation. Its function is as follows. Catalyzes the transfer of L-fucose, from a guanosine diphosphate-beta-L-fucose, to both the subterminal N-acetyl glucosamine (GlcNAc) of type 1 chain (beta-D-Gal-(1-&gt;3)-beta-D-GlcNAc) glycolipids and oligosaccharides via an alpha(1,4) linkage, and the subterminal glucose (Glc) or GlcNAc of type 2 chain (beta-D-Gal-(1-&gt;4)-beta-D-GlcNAc) oligosaccharides via an alpha(1,3) linkage, independently of the presence of terminal alpha-L-fucosyl-(1,2) moieties on the terminal galactose of these acceptors and participates in the blood groups Lewis determination and expression of Lewis a (Le(a)), lewis b (Le(b)), Lewis x/SSEA-1 (Le(x)) and lewis y (Le(y)) antigens. Also catalyzes the transfer of L-fucose to subterminal GlcNAc of sialyl- and disialyl-lactotetraosylceramide to produce sialyl Lewis a (sLe(a)) and disialyl Lewis a via an alpha(1,4) linkage and therefore may regulate cell surface sialyl Lewis a expression and consequently regulates adhesive properties to E-selectin, cell proliferation and migration. Catalyzes the transfer of an L-fucose to 3'-sialyl-N-acetyllactosamine by an alpha(1,3) linkage, which allows the formation of sialyl-Lewis x structure and therefore may regulate the sialyl-Lewis x surface antigen expression and consequently adhesive properties to E-selectin. Prefers type 1 chain over type 2 acceptors. Type 1 tetrasaccharide is a better acceptor than type 1 disaccharide suggesting that a beta anomeric configuration of GlcNAc in the substrate is preferred. Lewis-positive (Le(+)) individuals have an active enzyme while Lewis-negative (Le(-)) individuals have an inactive enzyme. The chain is 3-galactosyl-N-acetylglucosaminide 4-alpha-L-fucosyltransferase FUT3 from Bos taurus (Bovine).